Reading from the N-terminus, the 512-residue chain is SNF1-related protein kinase catalytic subunit alpha KIN10 (512 aa).

Residues 19–271 (YKLGRTLGIG…IPEIRQHPWF (253 aa)) enclose the Protein kinase domain. A Glycyl lysine isopeptide (Lys-Gly) (interchain with G-Cter in ubiquitin) cross-link involves residue Lys-20. 25-33 (LGIGSFGRV) lines the ATP pocket. Lys-34 participates in a covalent cross-link: Glycyl lysine isopeptide (Lys-Gly) (interchain with G-Cter in SUMO). Lys-48 lines the ATP pocket. Residue Lys-63 forms a Glycyl lysine isopeptide (Lys-Gly) (interchain with G-Cter in SUMO) linkage. Asp-142 acts as the Proton acceptor in catalysis. At Ser-164 the chain carries Phosphoserine. Thr-175 carries the post-translational modification Phosphothreonine; by GRIK1 or GRIK2. The auto-inhibitory domain (AID) stretch occupies residues 290–389 (AKKIDEEILQ…GLRSQYPVER (100 aa)). Residues 292 to 332 (KIDEEILQEVINMGFDRNHLIESLRNRTQNDGTVTYYLILD) form the UBA domain. The regulatory domain (RD) stretch occupies residues 294–512 (DEEILQEVIN…AAFLAQLRVL (219 aa)). Phosphoserine is present on Ser-364. Lys-390 is covalently cross-linked (Glycyl lysine isopeptide (Lys-Gly) (interchain with G-Cter in SUMO)). The PPI stretch occupies residues 390–512 (KWALGLQSRA…AAFLAQLRVL (123 aa)). The KA1 domain maps to 463–511 (AVKSPNVVKFEIQLYKTRDDKYLLDLQRVQGPQFLFLDLCAAFLAQLRV).

Belongs to the protein kinase superfamily. CAMK Ser/Thr protein kinase family. SNF1 subfamily. In terms of assembly, subunit of a probable heterotrimeric complex consisting of an alpha catalytic (KIN10 or KIN11) subunit, and a beta (KINB) and a gamma (KING or SNF4) non-catalytic regulatory subunits. Interacts with KINB2, KINB3, SNF4 and probably with KINB1 and KING1. Interacts with SKP1/ASK1, PAD1, the N-terminus of PRL1 and the WD40 domain of 5PTase13. Potential subunit of a SCF ubiquitin ligase complex consisting of a SNF1-related protein kinase, SKP1 and CUL1. The association of the SCF complex with the proteasome may be mediated by PAD1 and seems to be inhibited by the interaction with PRL1. Interacts with ATAF1. Interacts with ESD4. Interacts with SCE1. Interacts with FUS3. Interacts with PP2C74. Interacts with CDKE1. Interacts with ABI1 and PP2CA. Interacts with KRP6. Interacts with CIPK14. Interacts with FLZ proteins through their FLZ-type zinc finger domains. Interacts with GEBP/STKR1. Interacts with MYC2. Interacts with IDD8. Interacts with BZIP63. Interacts with PTL. Interacts with FLZ3, FLZ9, TCP3, TCP13, HB21/ZHD3 and HB23/ZHD10. Interacts with PTP1. Interacts with RAPTOR1B. Forms oligomers in vitro under strongly reducing conditions. Interacts with WRI1. Interacts with EIN3. Component of a ternary complex composed of BZIP2-BZIP63 heterodimer and KIN10. Interacts with IPK2b. Interacts with FLZ6 and FLZ10. Post-translationally, phosphorylated at Thr-175 in response to glucose. Phosphorylated at Thr-175 under submergence. Autophosphorylated. Dephosphorylated at Thr-175 by ABI1 and PP2CA. Ubiquitinated. Degradation is mediated by a CUL4-based E3 ligase that uses PRL1 as a substrate receptor. In terms of processing, sumoylated by SIZ1. Sumoylated SnRK1 is ubiquitinated and degraded by the proteasome. As to expression, isoform 2 is widely expressed, especially in newly developing tissues. Isoform 2 is expressed throughout the seedling, with highest expression in leaf primordia and vascular tissue, and the seedling root tip. Isoform 2 is later expressed in developing lateral root primordia and developing embryos within siliques. Isoform 1 is widely expressed but at very low levels.

The protein localises to the plastid. Its subcellular location is the chloroplast. It localises to the cytoplasm. It is found in the nucleus. The protein resides in the golgi apparatus. The protein localises to the endoplasmic reticulum. It carries out the reaction L-seryl-[protein] + ATP = O-phospho-L-seryl-[protein] + ADP + H(+). It catalyses the reaction L-threonyl-[protein] + ATP = O-phospho-L-threonyl-[protein] + ADP + H(+). Its activity is regulated as follows. Activated by phosphorylation at Thr-175 by GRIK1/SNAK2 and GRIK2/SNAK1. Inactivated by dephosphorylation at Thr-175. Inhibited by trehalose-6-phosphate. Down-regulated by SR45 by affecting its stability. Reduced kinase activity in response to H(2)O(2) treatment. The redox-state of Cys-177 seems to directly influence its kinase activity. Down-regulated by FLZ6 and FLZ10. In terms of biological role, catalytic subunit of the probable trimeric SNF1-related protein kinase (SnRK) complex, a central regulator of cellular energy homeostasis, which, in response to seemingly unrelated darkness, sugar and stress conditions, activates energy-producing pathways and inhibits energy-consuming processes. May play a role in a signal transduction cascade regulating gene expression and carbohydrate metabolism in higher plants. The SnRK complex may also be involved in the regulation of fatty acid synthesis by phosphorylation of acetyl-CoA carboxylase and in assimilation of nitrogen by phosphorylating nitrate reductase. In vitro, KIN10 exhibits kinase activity on sucrose phosphate synthase and the kinase activity is inhibited by PRL1. May be a subunit of a SCF ubiquitin ligase complex and thus be involved in proteasomal ubiquitination. Phosphorylates GRIK1/SNAK2 and GRIK2/SNAK1 in vitro. Cooperates with FUS3 to regulate developmental phase transitions and lateral organ development and act both as positive regulators of abscisic acid (ABA) signaling during germination. Phosphorylates FUS3 in embryo. Negatively modulates MYC2 accumulation through its protein phosphorylation. Phosphorylates geminivirus (CaLCuV, TGMV, ToMoV) AL2 protein resulting in a delay in the viral DNA accumulation and symptom appearance during infection. Regulates bZIP63 activity to alter metabolism in response to starvation through its protein phosphorylation. Under sugar deprivation conditions, antagonizes the IDD8 function in flowering time control by its protein phosphorylation. Plays a cardinal role in the control of cell proliferation through inhibition of KRP6 activity by its protein phosphorylation. Under submergence, phosphorylates PTP1, leading to the release of the MPK6 signaling pathway inhibition. Triggers its own SUMO-mediated proteasomal degradation, establishing a negative feedback loop that attenuates SnRK1 signaling and prevents detrimental hyperactivation of stress responses. Phosphorylates RAPTOR1B in vitro. Phosphorylates and down-regulates HMGR1S in vitro. Kinase activity is redox-sensitive. Acts upstream of TOR in the regulation of autophagy. Required for the activation of autophagy by many abiotic stresses. Involved in positive regulation of autophagy, possibly by affecting the phosphorylation of ATG1 proteins. Negatively modulates WRI1 accumulation through its protein phosphorylation. Modulates leaf senescence progression by the negative regulation of EIN3 accumulation through its protein phosphorylation. Under extended darkness, C/S1-bZIP-SnRK1 complex interacts with the histone acetylation machinery to remodel chromatin and facilitate transcription. BZIP2-BZIP63-KIN10 complex binds to the ETFQO promoter to up-regulate its transcription. Phosphorylates and down-regulates IPK2b in vitro. Involved in the regulation of sucrose-induced hypocotyl elongation under light/dark cycles. The sequence is that of SNF1-related protein kinase catalytic subunit alpha KIN10 from Arabidopsis thaliana (Mouse-ear cress).